We begin with the raw amino-acid sequence, 493 residues long: NADH-ubiquinone oxidoreductase 51 kDa subunit, mitochondrial (493 aa).

Residues 1 to 27 (MLSRTAAPTKASARTLSRAAAEQCRTF) constitute a mitochondrion transit peptide. An NAD(+)-binding site is contributed by 96–105 (GRGGAGFPSG). 212–259 (GAGAYVCGEETSLIESLEGKPGKPRLKPPFPAAVGLFGCPSTVANVET) is a binding site for FMN. [4Fe-4S] cluster contacts are provided by Cys391, Cys394, Cys397, and Cys437.

This sequence belongs to the complex I 51 kDa subunit family. As to quaternary structure, complex I is composed of about 40 different subunits. This is a component of the flavoprotein-sulfur (FP) fragment of the enzyme. Requires FMN as cofactor. The cofactor is [4Fe-4S] cluster.

It is found in the mitochondrion inner membrane. The catalysed reaction is a ubiquinone + NADH + 5 H(+)(in) = a ubiquinol + NAD(+) + 4 H(+)(out). Core subunit of the mitochondrial membrane respiratory chain NADH dehydrogenase (Complex I) that is believed to belong to the minimal assembly required for catalysis. Complex I functions in the transfer of electrons from NADH to the respiratory chain. The immediate electron acceptor for the enzyme is believed to be ubiquinone. The sequence is that of NADH-ubiquinone oxidoreductase 51 kDa subunit, mitochondrial (nuo-51) from Neurospora crassa (strain ATCC 24698 / 74-OR23-1A / CBS 708.71 / DSM 1257 / FGSC 987).